The sequence spans 549 residues: Probable protein kinase UbiB (549 aa).

Positions 123-501 (DFEDTPLASA…QQKAHKSNYL (379 aa)) constitute a Protein kinase domain. ATP is bound by residues 129–137 (LASASISQV) and Lys152. Asp287 functions as the Proton acceptor in the catalytic mechanism. Transmembrane regions (helical) follow at residues 498–518 (SNYL…LLNQ) and 520–540 (ATLW…VLGW).

The protein belongs to the ABC1 family. UbiB subfamily.

Its subcellular location is the cell inner membrane. The protein operates within cofactor biosynthesis; ubiquinone biosynthesis [regulation]. Its function is as follows. Is probably a protein kinase regulator of UbiI activity which is involved in aerobic coenzyme Q (ubiquinone) biosynthesis. This chain is Probable protein kinase UbiB, found in Shewanella piezotolerans (strain WP3 / JCM 13877).